We begin with the raw amino-acid sequence, 598 residues long: NADH-quinone oxidoreductase subunit C/D (598 aa).

The interval 1–189 (MTDLTTSDST…DPFVLTKQKE (189 aa)) is NADH dehydrogenase I subunit C. Positions 213-598 (DFMFLNLGPN…IDFVMSDVDR (386 aa)) are NADH dehydrogenase I subunit D.

The protein in the N-terminal section; belongs to the complex I 30 kDa subunit family. This sequence in the C-terminal section; belongs to the complex I 49 kDa subunit family. As to quaternary structure, NDH-1 is composed of 13 different subunits. Subunits NuoB, CD, E, F, and G constitute the peripheral sector of the complex.

The protein resides in the cell inner membrane. The catalysed reaction is a quinone + NADH + 5 H(+)(in) = a quinol + NAD(+) + 4 H(+)(out). In terms of biological role, NDH-1 shuttles electrons from NADH, via FMN and iron-sulfur (Fe-S) centers, to quinones in the respiratory chain. The immediate electron acceptor for the enzyme in this species is believed to be ubiquinone. Couples the redox reaction to proton translocation (for every two electrons transferred, four hydrogen ions are translocated across the cytoplasmic membrane), and thus conserves the redox energy in a proton gradient. The sequence is that of NADH-quinone oxidoreductase subunit C/D from Yersinia enterocolitica serotype O:8 / biotype 1B (strain NCTC 13174 / 8081).